We begin with the raw amino-acid sequence, 638 residues long: Rik1-associated factor 1 (638 aa).

4 WD repeats span residues 297-336 (KEYSTISDLCFSKGNLFLYTGAFDNAVKVWDMEGNLCGIF), 486-525 (TTQKDINHATISNSGILVTSSGTDNQTFVWDSRKPDKPLS), 544-583 (EVDAGINMAQWQPKGNLFVTGGSDGIVKVWDLRLNNPFIQ), and 587-626 (EMNSAITYGGFSEDASKLTVCCVGGDVNMYSLGNDNGNKF).

In terms of assembly, component of the Clr4 methyltransferase complex (ClrC) composed of at least clr4, rik1, pcu4, rbx1, raf1 and raf2. The cullin pcu4, rik1, raf1, raf2 and the ring-box protein rbx1 are components of an E3 ubiquitin ligase, whose activity is essential for heterochromatin assembly. Interacts with nup189.

It is found in the cytoplasm. Its subcellular location is the nucleus. The protein localises to the chromosome. Its function is as follows. Component of the Clr4 methyltransferase complex (ClrC) which contributes to the establishment of heterochromatin by specifically methylating histone H3 to form H3K9me. ClrC preferentially ubiquitylates H3K14 and ClrC-mediated H3 ubiquitination promotes clr4 methyltransferase activity for the methylation of H3K9. H3K9me represents a specific tag for epigenetic transcriptional repression by recruiting swi6/HP1 to methylated histones which leads to transcriptional silencing within centromeric heterochromatin, telomeric regions and at the silent mating-type loci. Has a role in both mitotic and meiotic chromosome segregation. This chain is Rik1-associated factor 1 (raf1), found in Schizosaccharomyces pombe (strain 972 / ATCC 24843) (Fission yeast).